Here is a 408-residue protein sequence, read N- to C-terminus: 8-amino-7-oxononanoate synthase (408 aa).

Arg-20 contributes to the substrate binding site. 119 to 120 (GY) lines the pyridoxal 5'-phosphate pocket. Position 144 (His-144) interacts with substrate. Residues Ser-190, His-218, and Thr-246 each coordinate pyridoxal 5'-phosphate. Lys-249 is modified (N6-(pyridoxal phosphate)lysine). Substrate is bound at residue Thr-372.

It belongs to the class-II pyridoxal-phosphate-dependent aminotransferase family. BioF subfamily. Homodimer. It depends on pyridoxal 5'-phosphate as a cofactor.

It carries out the reaction 6-carboxyhexanoyl-[ACP] + L-alanine + H(+) = (8S)-8-amino-7-oxononanoate + holo-[ACP] + CO2. The protein operates within cofactor biosynthesis; biotin biosynthesis. Catalyzes the decarboxylative condensation of pimeloyl-[acyl-carrier protein] and L-alanine to produce 8-amino-7-oxononanoate (AON), [acyl-carrier protein], and carbon dioxide. This is 8-amino-7-oxononanoate synthase from Leptothrix cholodnii (strain ATCC 51168 / LMG 8142 / SP-6) (Leptothrix discophora (strain SP-6)).